Reading from the N-terminus, the 461-residue chain is MQKTYLLALVSLLASSLVEARSTIADQTRLDVGGSDESFDGIDGIDPNNSNVLTHKLMDKVIASSELLSLHRSLVEIKSISDNEQAVGGFLMDYLSSKNFTVEKQYVDYDDPTGKPIRSNRRFNIYAYPGDSASPGIILTSHIDTVPPFIPYSLSHPESDSFKRDDILISGRGTVDDKASVACQIIAAMEHLEKHPDIPIGLLFVVSEEVGGKGMSTFSDSRLNSGTYHTIIFGEPTERALVAGHKGMVSFGIRVHGKPAHSGYPWLGRSAVSEILPILAEVDRLGDIPVSQGGLPSSEKYGRTTLNIGFMSGGVAANVVPEQAVAKVAVRLAAGDPEDAKDIIFRAIRNAATKHRKDATVVISNGHEQPKGDIEVIFGLEAYGVVDIDADVDGFNVTTVNYGTDVPHWKIYGDNVKRYLYGPGTIFVAHGKDEALTVGELEAGLEGYKTLVAKAAERERT.

An N-terminal signal peptide occupies residues 1–20 (MQKTYLLALVSLLASSLVEA). N-linked (GlcNAc...) asparagine glycosylation is found at Asn-48 and Asn-99. Asp-176 serves as a coordination point for Zn(2+). Catalysis depends on Glu-208, which acts as the Proton acceptor. Glu-209 provides a ligand contact to Zn(2+). Asn-396 carries an N-linked (GlcNAc...) asparagine glycan.

It belongs to the peptidase M20A family. The cofactor is Zn(2+).

The protein resides in the secreted. The chain is Probable carboxypeptidase MGYG_04702 from Arthroderma gypseum (strain ATCC MYA-4604 / CBS 118893) (Microsporum gypseum).